The sequence spans 525 residues: Bifunctional purine biosynthesis protein PurH (525 aa).

The MGS-like domain maps to 1 to 148 (MPSNNLIKNA…KNYKNVIVIV (148 aa)).

It belongs to the PurH family.

It carries out the reaction (6R)-10-formyltetrahydrofolate + 5-amino-1-(5-phospho-beta-D-ribosyl)imidazole-4-carboxamide = 5-formamido-1-(5-phospho-D-ribosyl)imidazole-4-carboxamide + (6S)-5,6,7,8-tetrahydrofolate. The enzyme catalyses IMP + H2O = 5-formamido-1-(5-phospho-D-ribosyl)imidazole-4-carboxamide. Its pathway is purine metabolism; IMP biosynthesis via de novo pathway; 5-formamido-1-(5-phospho-D-ribosyl)imidazole-4-carboxamide from 5-amino-1-(5-phospho-D-ribosyl)imidazole-4-carboxamide (10-formyl THF route): step 1/1. It participates in purine metabolism; IMP biosynthesis via de novo pathway; IMP from 5-formamido-1-(5-phospho-D-ribosyl)imidazole-4-carboxamide: step 1/1. This chain is Bifunctional purine biosynthesis protein PurH, found in Buchnera aphidicola subsp. Acyrthosiphon pisum (strain 5A).